Reading from the N-terminus, the 1077-residue chain is Histone deacetylase 4 (1077 aa).

A coiled-coil region spans residues 66–169 (REQQLQQELL…GKESAVASTE (104 aa)). The interval 117–312 (MLAMKHQQEL…NSSSGNVSTE (196 aa)) is interaction with MEF2A. The segment covering 132 to 162 (KLERHRQEQELEKQHREQKLQQLKNKEKGKE) has biased composition (basic and acidic residues). Disordered regions lie at residues 132–167 (KLER…AVAS), 204–225 (KTQH…ASYN), and 239–327 (PLRK…AETS). Over residues 205-224 (TQHSSLDQSSPPQSGVSASY) the composition is skewed to polar residues. Position 209 is a phosphoserine (serine 209). Serine 245 bears the Phosphoserine; by CaMK4 and SIK1 mark. Over residues 258 to 273 (KVAERRSSPLLRRKDG) the composition is skewed to basic and acidic residues. Positions 289 to 310 (SACSSAPGSGPSSPNSSSGNVS) are enriched in low complexity. Positions 348 to 353 (PSLPNI) match the PxLPxI/L motif; mediates interaction with ANKRA2 and 14-3-3 proteins motif. A Phosphoserine modification is found at serine 349. Position 466 is a phosphoserine; by CaMK4 and SIK1 (serine 466). Disordered regions lie at residues 508 to 530 (SKPS…ELRE), 542 to 582 (RLPG…RPAT), and 623 to 646 (RPLS…EPPT). Positions 515 to 530 (RQPESHPEETEEELRE) are enriched in basic and acidic residues. Lysine 557 participates in a covalent cross-link: Glycyl lysine isopeptide (Lys-Gly) (interchain with G-Cter in SUMO). Residues serine 563, serine 630, and serine 631 each carry the phosphoserine modification. The span at 627 to 639 (RAQSSPASATFPM) shows a compositional bias: polar residues. A histone deacetylase region spans residues 653 to 1077 (GLVYDTLMLK…EEPMEEEPPL (425 aa)). Positions 665, 667, 673, and 744 each coordinate Zn(2+). Histidine 796 is an active-site residue. The Nuclear export signal signature appears at 1044–1077 (EEAETVTAMASLSVGVKPAEKRSEEEPMEEEPPL). Positions 1052 to 1077 (MASLSVGVKPAEKRSEEEPMEEEPPL) are disordered.

Belongs to the histone deacetylase family. HD type 2 subfamily. As to quaternary structure, homodimer. Homodimerization via its N-terminal domain. Interacts with HDAC7. Interacts with MEF2A, MEF2C, MEF2D, MORC2 and NR2C1. Interacts with a 14-3-3 chaperone proteins in a phosphorylation dependent manner. Interacts with 14-3-3 protein YWHAB. Interacts with KDM5B and AHRR. Interacts with BTBD14B. Interacts with MYOCD. Interacts (via PxLPxI/L motif) with ANKRA2 (via ankyrin repeats). Interacts with CUL7 (as part of the 3M complex); negatively regulated by ANKRA2. Interacts with EP300 in the presence of TFAP2C. Interacts with HSPA1A and HSPA1B leading to their deacetylation at 'Lys-77'. Interacts with ZBTB7B; the interaction allows the recruitment of HDAC4 on CD8 loci for deacetylation and possible inhibition of CD8 genes expression. Interacts with DHX36. Interacts with SIK3; this interaction leads to HDAC4 retention in the cytoplasm. In terms of processing, phosphorylated by CaMK4 at Ser-245, Ser-466 and Ser-630. Phosphorylation at other residues by CaMK2D is required for the interaction with 14-3-3. Phosphorylation at Ser-349, within the PxLPxI/L motif, impairs the binding of ANKRA2 but generates a high-affinity docking site for 14-3-3. Post-translationally, sumoylation on Lys-557 is promoted by the E3 SUMO-protein ligase RANBP2, and prevented by phosphorylation by CaMK4.

The protein localises to the nucleus. It is found in the cytoplasm. The enzyme catalyses N(6)-acetyl-L-lysyl-[histone] + H2O = L-lysyl-[histone] + acetate. In terms of biological role, responsible for the deacetylation of lysine residues on the N-terminal part of the core histones (H2A, H2B, H3 and H4). Histone deacetylation gives a tag for epigenetic repression and plays an important role in transcriptional regulation, cell cycle progression and developmental events. Histone deacetylases act via the formation of large multiprotein complexes. Involved in muscle maturation via its interaction with the myocyte enhancer factors such as MEF2A, MEF2C and MEF2D. Deacetylates HSPA1A and HSPA1B at 'Lys-77' leading to their preferential binding to co-chaperone STUB1. The polypeptide is Histone deacetylase 4 (Hdac4) (Rattus norvegicus (Rat)).